The sequence spans 183 residues: Streptavidin (183 aa).

Residues 1-24 (MRKIVVAAIAVSLTTVSITASASA) form the signal peptide. Positions 37–159 (AEAGITGTWY…GHDTFTKVKP (123 aa)) constitute an Avidin-like domain. Biotin contacts are provided by tyrosine 67 and tyrosine 78. Positions 83 to 85 (RYD) match the Cell attachment site; atypical motif. The biotin site is built by tryptophan 116, tryptophan 132, and tryptophan 144.

This sequence belongs to the avidin/streptavidin family. Homotetramer.

It localises to the secreted. Functionally, the biological function of streptavidin is not known. Forms a strong non-covalent specific complex with biotin (one molecule of biotin per subunit of streptavidin). The chain is Streptavidin from Streptomyces avidinii.